Reading from the N-terminus, the 430-residue chain is Tol-Pal system protein TolB (430 aa).

The N-terminal stretch at 1–21 (MKQALRVAFGFLILWASVLHA) is a signal peptide.

This sequence belongs to the TolB family. As to quaternary structure, the Tol-Pal system is composed of five core proteins: the inner membrane proteins TolA, TolQ and TolR, the periplasmic protein TolB and the outer membrane protein Pal. They form a network linking the inner and outer membranes and the peptidoglycan layer.

The protein localises to the periplasm. Functionally, part of the Tol-Pal system, which plays a role in outer membrane invagination during cell division and is important for maintaining outer membrane integrity. TolB occupies a key intermediary position in the Tol-Pal system because it communicates directly with both membrane-embedded components, Pal in the outer membrane and TolA in the inner membrane. This Shigella boydii serotype 4 (strain Sb227) protein is Tol-Pal system protein TolB.